The primary structure comprises 509 residues: 3-octaprenyl-4-hydroxybenzoate carboxy-lyase (509 aa).

Asn179 serves as a coordination point for Mn(2+). Residues 182-184 (IYR), 196-198 (RWL), and 201-202 (RG) contribute to the prenylated FMN site. Glu245 contacts Mn(2+). Asp304 (proton donor) is an active-site residue.

It belongs to the UbiD family. As to quaternary structure, homohexamer. Prenylated FMN is required as a cofactor. Mn(2+) serves as cofactor.

It localises to the cell membrane. It catalyses the reaction a 4-hydroxy-3-(all-trans-polyprenyl)benzoate + H(+) = a 2-(all-trans-polyprenyl)phenol + CO2. It functions in the pathway cofactor biosynthesis; ubiquinone biosynthesis. Functionally, catalyzes the decarboxylation of 3-octaprenyl-4-hydroxy benzoate to 2-octaprenylphenol, an intermediate step in ubiquinone biosynthesis. This Cupriavidus pinatubonensis (strain JMP 134 / LMG 1197) (Cupriavidus necator (strain JMP 134)) protein is 3-octaprenyl-4-hydroxybenzoate carboxy-lyase.